The chain runs to 251 residues: Ribonuclease PH (251 aa).

Phosphate contacts are provided by residues R90 and 128–130 (GTR).

It belongs to the RNase PH family. As to quaternary structure, homohexameric ring arranged as a trimer of dimers.

The enzyme catalyses tRNA(n+1) + phosphate = tRNA(n) + a ribonucleoside 5'-diphosphate. In terms of biological role, phosphorolytic 3'-5' exoribonuclease that plays an important role in tRNA 3'-end maturation. Removes nucleotide residues following the 3'-CCA terminus of tRNAs; can also add nucleotides to the ends of RNA molecules by using nucleoside diphosphates as substrates, but this may not be physiologically important. Probably plays a role in initiation of 16S rRNA degradation (leading to ribosome degradation) during starvation. The protein is Ribonuclease PH of Leifsonia xyli subsp. xyli (strain CTCB07).